The following is a 428-amino-acid chain: Aerobic C4-dicarboxylate transport protein (428 aa).

Transmembrane regions (helical) follow at residues 5–27 (LFKSLYFQVLTAIAIGILLGHYY), 47–64 (MIIAPVIFCTVVTGIAGM), 77–99 (ALLYFEIVSTIALIIGLIIVNVV), 141–163 (VIGAFASGNILQVLLFAVLFGFA), 184–206 (VIFGIINMIMRLAPIGAFGAMAF), 216–238 (LVQLGQLIICFYITCILFVVVVL), 289–311 (VVGLVIPTGYSFNLDGTSIYLTM), 326–348 (IFHQITLLVVLLLSSKGAAGVTG), and 353–375 (VLAATISAVGHLPVAGLALILGI).

The protein belongs to the dicarboxylate/amino acid:cation symporter (DAACS) (TC 2.A.23) family.

The protein resides in the cell inner membrane. Functionally, responsible for the transport of dicarboxylates such as succinate, fumarate, and malate from the periplasm across the inner membrane. In Salmonella typhimurium (strain LT2 / SGSC1412 / ATCC 700720), this protein is Aerobic C4-dicarboxylate transport protein (dctA).